A 1092-amino-acid polypeptide reads, in one-letter code: Leukemia inhibitory factor receptor (1092 aa).

Residues 1 to 43 (MAAYSWWRQPSWMVDNKRSRMTPNLPWLLSALTLLHLTMHANG) form the signal peptide. The Extracellular portion of the chain corresponds to 44–828 (LKRGVQDLKC…SMFVVTKENS (785 aa)). The region spanning 45–126 (KRGVQDLKCT…QSKFTLNEKD (82 aa)) is the Fibronectin type-III 1 domain. Cystine bridges form between Cys53/Cys63 and Cys80/Cys88. 4 N-linked (GlcNAc...) asparagine glycosylation sites follow: Asn164, Asn199, Asn238, and Asn261. Disulfide bonds link Cys208/Cys265 and Cys336/Cys346. Fibronectin type-III domains lie at 330–429 (VPQK…VAPH), 430–529 (DPTS…TEAT), 533–624 (GPDT…IPND), 622–714 (PNDD…IGYV), and 719–828 (PIVA…KENS). Asn385, Asn402, Asn421, Asn440, Asn453, and Asn476 each carry an N-linked (GlcNAc...) asparagine glycan. An intrachain disulfide couples Cys461 to Cys506. Residues 514 to 518 (WSRWS) carry the WSXWS motif motif. N-linked (GlcNAc...) asparagine glycosylation is found at Asn567, Asn647, Asn658, Asn675, Asn724, and Asn782. The chain crosses the membrane as a helical span at residues 829–853 (VGLIIAILIPVAVAVIVGVVTSILC). Over 854-1092 (YRKREWIKET…TNFFQNKPND (239 aa)) the chain is Cytoplasmic. The Box 1 motif motif lies at 864-872 (FYPDIPNPE). Residues Ser922 and Ser1039 each carry the phosphoserine modification. The segment at 1009-1092 (EDTAAEDEEG…TNFFQNKPND (84 aa)) is disordered. 2 stretches are compositionally biased toward polar residues: residues 1027–1062 (ANVN…NSRQ) and 1081–1092 (SFTNFFQNKPND).

It belongs to the type I cytokine receptor family. Type 2 subfamily. Heterodimer composed of LIFR and IL6ST. The heterodimer formed by LIFR and IL6ST interacts with the complex formed by CNTF and CNTFR. Placenta, liver, kidney, heart, lung, brain, and embryos. The liver may be the primary site of synthesis of the secreted form.

Its subcellular location is the cell membrane. It is found in the secreted. Signal-transducing molecule. May have a common pathway with IL6ST. The soluble form inhibits the biological activity of LIF by blocking its binding to receptors on target cells. In Mus musculus (Mouse), this protein is Leukemia inhibitory factor receptor (Lifr).